Reading from the N-terminus, the 66-residue chain is Gallinacin-5 (66 aa).

Positions 1 to 19 (MQILTLLFAVLLLMLRAEP) are cleaved as a signal peptide. Residues 20–25 (GLSLAR) constitute a propeptide that is removed on maturation. 3 disulfide bridges follow: C31–C59, C38–C53, and C43–C60.

This sequence belongs to the beta-defensin family. As to expression, strong expression in the tongue and bone marrow. Low expression in the esophagus, trachea, lung, brain and ovary. Expressed in the ovarian stroma, but not in the ovarian follicles.

The protein resides in the secreted. It localises to the cytoplasmic granule. Functionally, has bactericidal activity. The protein is Gallinacin-5 (GAL5) of Gallus gallus (Chicken).